Here is a 94-residue protein sequence, read N- to C-terminus: Putative pterin-4-alpha-carbinolamine dehydratase (94 aa).

Belongs to the pterin-4-alpha-carbinolamine dehydratase family.

It catalyses the reaction (4aS,6R)-4a-hydroxy-L-erythro-5,6,7,8-tetrahydrobiopterin = (6R)-L-erythro-6,7-dihydrobiopterin + H2O. The chain is Putative pterin-4-alpha-carbinolamine dehydratase from Mycobacterium sp. (strain JLS).